A 1129-amino-acid chain; its full sequence is MEADWNELVTAQLSPPGSHPPAVPISTFAFDTTQELLWTGNNQGRVTSLYGPSLERYTSYRGHATSDGPVKQFLFTDKGVLSISRQSVHYSHRRGLTQWHLTSPDFKDLKCMNFTSKGTREILIAGCQEQMFKVDVEKGIVVDTLPVDAQYTIMKRAGQYLCAATKTGGIHILDSNSLSVIKVFEGHTGSISDMDAKGDFLATCGWSPRQQYAYMLDPFTNVFSLKTLKQLAPVPFHTGAAFVRMHPRMSTTAIIASQNGQMQVIDLMNPDSANLRQLNLYDSYLAGFEMAPSGEAFALADSNSNVHLWGSPAKVHFPEYSNPTEFADHVIPPASMDWSLDTPLNTIGMPYYKETLLSGWPSHMVFEVGAPPPKIDGAILSNMTRTDMGFFAKNPRTKRRNQIEVTRQTDRSSDSLTPPKFLSEKSRASLSLSEANAKAVETMETLTDLHLDDVTRKDVPAMYGNVEIKYSKFGVDDFDFAYYNQTPFSGLETHITNSYANSLLQLFRFTPLIRNLALQHTASPCLFESCLLCELGFLIDMLEKAAGLNCQASNFLKTFSGLSNAVSLNLLEEFAPNVALTSMIQNLNRFLLDKISEEFRQMLPSHGGTSLMDQVLETQARASMRCAQCANETIRGGKNFVNELVYPAKHVMKNTRIPRPTFSQILKASVERQDQTRGWCTKCNRYQQMVQRKTIQSVPGVLMLNAAIQTHEAKLLWSIPNWLPHEIGIIVDQGQFYCFEGQDLKLHLQRGVFDIMVYELVGVVADINSGEHQKPHLVATINTGPSSREPDAEDKWHLFNDFLVRPIPREEALRFEPSWKLPSVLTFQTKSARNKIDDSWKENLDTSILYRWWSSNPTPPDDKFKLLQVSTEAPRPGYPVAIDAEFIRLQAEEIEMKADGTRQTIRPDRKGLARVSVCRGEGEHAGLPFIDDYIAVTEQVVDYLTEWSGISPGDLNRETSPHAPVSLKHAYKKLWLLLNLGCVFVGHSLANDFRTINIHVPRSQVVDTSNLFFLPDFKRKLNLKFLAWCVLKEQIQQDTHDSIEDATTALKLWRKYEEFVDAGVLEPMLNDIYATGSQVKFKAPGSGNRNSMPAGMTATGAGRDTPEPMTTPKKGGAFGGVGFRSPMRR.

WD repeat units lie at residues 20 to 60, 104 to 146, 148 to 183, 186 to 226, and 280 to 319; these read PPAV…YTSY, PDFK…DTLP, DAQYTIMKRAGQYLCAATKTGGIHILDSNSLSVIKV, GHTG…FSLK, and LYDSYLAGFEMAPSGEAFALADSNSNVHLWGSPAKVHFPE. Positions 320–457 are linker; it reads YSNPTEFADH…DLHLDDVTRK (138 aa). Residues 396–427 form a disordered region; it reads RTKRRNQIEVTRQTDRSSDSLTPPKFLSEKSR. Residues 458–830 enclose the USP domain; sequence DVPAMYGNVE…LPSVLTFQTK (373 aa). One can recognise an Exonuclease domain in the interval 880–1052; sequence VAIDAEFIRL…IEDATTALKL (173 aa). The a divalent metal cation site is built by Asp883, Glu885, Asp992, and Asp1045. The segment at 1083–1129 is disordered; the sequence is APGSGNRNSMPAGMTATGAGRDTPEPMTTPKKGGAFGGVGFRSPMRR.

The protein belongs to the peptidase C19 family. PAN2 subfamily. Forms a heterotrimer with an asymmetric homodimer of the regulatory subunit PAN3 to form the poly(A)-nuclease (PAN) deadenylation complex. A divalent metal cation serves as cofactor.

It localises to the cytoplasm. It carries out the reaction Exonucleolytic cleavage of poly(A) to 5'-AMP.. Positively regulated by the regulatory subunit PAN3. Catalytic subunit of the poly(A)-nuclease (PAN) deadenylation complex, one of two cytoplasmic mRNA deadenylases involved in mRNA turnover. PAN specifically shortens poly(A) tails of RNA and the activity is stimulated by poly(A)-binding protein PAB1. PAN deadenylation is followed by rapid degradation of the shortened mRNA tails by the CCR4-NOT complex. Deadenylated mRNAs are then degraded by two alternative mechanisms, namely exosome-mediated 3'-5' exonucleolytic degradation, or deadenylation-dependent mRNA decaping and subsequent 5'-3' exonucleolytic degradation by XRN1. May also be involved in post-transcriptional maturation of mRNA poly(A) tails. This chain is PAN2-PAN3 deadenylation complex catalytic subunit PAN2, found in Phaeosphaeria nodorum (strain SN15 / ATCC MYA-4574 / FGSC 10173) (Glume blotch fungus).